Consider the following 154-residue polypeptide: Protein X (154 aa).

The mitochondrial targeting sequence stretch occupies residues 68 to 117; it reads PCALRFTSARRMETTVNAHQILPKVLHKRTLGLPAMSTTDLEAYFKDCVF.

The protein belongs to the orthohepadnavirus protein X family. In terms of assembly, may form homodimer. May interact with host CEBPA, CFLAR, CREB1, DDB1, E4F1, HBXIP, HSPD1/HSP60, NFKBIA, POLR2E and SMAD4. Interacts with host SMC5-SMC6 complex and induces its degradation. Interacts with host TRPC4AP; leading to prevent ubiquitination of TRPC4AP. Interacts with host PLSCR1; this interaction promotes ubiquitination and degradation of HBx and impairs HBx-mediated cell proliferation. A fraction may be phosphorylated in insect cells and HepG2 cells, a human hepatoblastoma cell line. Phosphorylated in vitro by host protein kinase C or mitogen-activated protein kinase. N-acetylated in insect cells.

The protein resides in the host cytoplasm. It is found in the host nucleus. The protein localises to the host mitochondrion. Its function is as follows. Multifunctional protein that plays a role in silencing host antiviral defenses and promoting viral transcription. Does not seem to be essential for HBV infection. May be directly involved in development of cirrhosis and liver cancer (hepatocellular carcinoma). Most of cytosolic activities involve modulation of cytosolic calcium. The effect on apoptosis is controversial depending on the cell types in which the studies have been conducted. May induce apoptosis by localizing in mitochondria and causing loss of mitochondrial membrane potential. May also modulate apoptosis by binding host CFLAR, a key regulator of the death-inducing signaling complex (DISC). Promotes viral transcription by using the host E3 ubiquitin ligase DDB1 to target the SMC5-SMC6 complex to proteasomal degradation. This host complex would otherwise bind to viral episomal DNA, and prevents its transcription. Moderately stimulates transcription of many different viral and cellular transcription elements. Promoters and enhancers stimulated by HBx contain DNA binding sites for NF-kappa-B, AP-1, AP-2, c-EBP, ATF/CREB, or the calcium-activated factor NF-AT. The sequence is that of Protein X from Homo sapiens (Human).